We begin with the raw amino-acid sequence, 338 residues long: Cytochrome c biogenesis protein CcsA (338 aa).

The next 8 helical transmembrane spans lie at 11 to 31 (VLLDNAAFAALMVATALYWLA), 39 to 59 (LLHELGTGASAVALLSVTGLL), 76 to 96 (ESLFFLCWCVLAVHIAAEAFA), 100 to 120 (LVGVFTLPVALGMVAFSSLTL), 145 to 165 (VMILSYGALMVGSLVSIAFLI), 244 to 264 (LIGLGFPLITVGIIAGAVWAN), 278 to 295 (TWSLITWFIFAAYLHARI), and 305 to 325 (ATLAAVGFVSVWITYLGVNFL).

This sequence belongs to the CcmF/CycK/Ccl1/NrfE/CcsA family. May interact with ccs1.

It localises to the cell inner membrane. In terms of biological role, required during biogenesis of c-type cytochromes (cytochrome c6 and cytochrome f) at the step of heme attachment. The polypeptide is Cytochrome c biogenesis protein CcsA (Gloeobacter violaceus (strain ATCC 29082 / PCC 7421)).